The sequence spans 837 residues: Tuftelin-interacting protein 11 (837 aa).

2 stretches are compositionally biased toward basic and acidic residues: residues 1–13 and 50–64; these read MSLS…GEGR and TYGV…DERP. 2 disordered regions span residues 1 to 21 and 50 to 136; these read MSLS…DDER and TYGV…AGGT. The interval 1–50 is required for interaction with DHX15; sequence MSLSHLYRDGEGRVDDDDDERENFEITDWDLQNEFNPNRQRHWQTKEEAT. A phosphoserine mark is found at Ser-2, Ser-59, and Ser-98. Positions 91–102 are enriched in acidic residues; the sequence is EEAELDDSEDEE. Basic and acidic residues predominate over residues 103 to 116; sequence KPGKQEELPKDLGP. Position 144 is a phosphoserine (Ser-144). The G-patch domain maps to 149–195; that stretch reads TKGIGQKLLQKMGYVPGRGLGKNAQGIINPIEAKQRKGKGAVGAYGS. A disordered region spans residues 183 to 236; that stretch reads QRKGKGAVGAYGSERTTQSLQDFPVVDSEEEAEEEFQKELSQWRKDPSGSKKKP. Residue Ser-210 is modified to Phosphoserine. Basic and acidic residues predominate over residues 217–231; that stretch reads EFQKELSQWRKDPSG. The Nuclear localization signal signature appears at 700–705; it reads VKDKFN. The interval 710–734 is required for nuclear speckle localization; it reads IMNRAVSSNVGAYMQPGARENIAYL.

Belongs to the TFP11/STIP family. As to quaternary structure, identified in the spliceosome C complex. Found in the Intron Large (IL) complex, a post-mRNA release spliceosomal complex containing the excised intron, U2, U5 and U6 snRNPs, and splicing factors. Interacts with TUFT1. Interacts with DHX15; indicative for a recruitment of DHX15 to the IL complex. Interacts with GCFC2.

Its subcellular location is the cytoplasm. The protein localises to the nucleus. In terms of biological role, involved in pre-mRNA splicing, specifically in spliceosome disassembly during late-stage splicing events. Intron turnover seems to proceed through reactions in two lariat-intron associated complexes termed Intron Large (IL) and Intron Small (IS). In cooperation with DHX15 seems to mediate the transition of the U2, U5 and U6 snRNP-containing IL complex to the snRNP-free IS complex leading to efficient debranching and turnover of excised introns. May play a role in the differentiation of ameloblasts and odontoblasts or in the forming of the enamel extracellular matrix. The chain is Tuftelin-interacting protein 11 (TFIP11) from Oryctolagus cuniculus (Rabbit).